We begin with the raw amino-acid sequence, 210 residues long: dITP/XTP pyrophosphatase (210 aa).

13–18 (THNPGK) contributes to the substrate binding site. 2 residues coordinate Mg(2+): aspartate 45 and aspartate 74. Aspartate 74 functions as the Proton acceptor in the catalytic mechanism. Substrate is bound by residues serine 75, 160–163 (FGYD), lysine 183, and 195–196 (HR).

Belongs to the HAM1 NTPase family. In terms of assembly, homodimer. The cofactor is Mg(2+).

It carries out the reaction XTP + H2O = XMP + diphosphate + H(+). The enzyme catalyses dITP + H2O = dIMP + diphosphate + H(+). It catalyses the reaction ITP + H2O = IMP + diphosphate + H(+). Functionally, pyrophosphatase that catalyzes the hydrolysis of nucleoside triphosphates to their monophosphate derivatives, with a high preference for the non-canonical purine nucleotides XTP (xanthosine triphosphate), dITP (deoxyinosine triphosphate) and ITP. Seems to function as a house-cleaning enzyme that removes non-canonical purine nucleotides from the nucleotide pool, thus preventing their incorporation into DNA/RNA and avoiding chromosomal lesions. This is dITP/XTP pyrophosphatase from Rhodopseudomonas palustris (strain ATCC BAA-98 / CGA009).